The primary structure comprises 264 residues: uncharacterized protein (264 aa).

Positions 1-16 are cleaved as a signal peptide; it reads MKGKSALTLLLAGIFS. Cys17 carries the N-palmitoyl cysteine lipid modification. A lipid anchor (S-diacylglycerol cysteine) is attached at Cys17.

The protein localises to the cell inner membrane. This is an uncharacterized protein from Escherichia coli (strain K12).